Here is a 77-residue protein sequence, read N- to C-terminus: Secapin (77 aa).

An N-terminal signal peptide occupies residues 1-32 (MKNYSKNATYLITVLLFSFVAMLLIIPSKCEA). The propeptide occupies 33 to 52 (VSNDMQPLEARTADLVQQPR). Residues C61 and C72 are joined by a disulfide bond.

The protein belongs to the secapin family. In terms of tissue distribution, expressed by the venom gland.

The protein localises to the secreted. Its function is as follows. Nontoxic peptide. This Apis cerana cerana (Oriental honeybee) protein is Secapin.